A 449-amino-acid chain; its full sequence is F-box/LRR-repeat protein At3g60040 (449 aa).

The F-box domain maps to R12–Q64. LRR repeat units follow at residues L161–T188, F191–H215, H216–Y237, C239–H263, E287–P312, and K340–D365.

The chain is F-box/LRR-repeat protein At3g60040 from Arabidopsis thaliana (Mouse-ear cress).